Reading from the N-terminus, the 155-residue chain is Small ribosomal subunit protein uS7c (155 aa).

The protein belongs to the universal ribosomal protein uS7 family. In terms of assembly, part of the 30S ribosomal subunit.

It localises to the plastid. Its function is as follows. One of the primary rRNA binding proteins, it binds directly to 16S rRNA where it nucleates assembly of the head domain of the 30S subunit. The chain is Small ribosomal subunit protein uS7c (rps7) from Aneura mirabilis (Parasitic liverwort).